A 741-amino-acid chain; its full sequence is Phosphoribosylformylglycinamidine synthase subunit PurL (741 aa).

Residue His-53 is part of the active site. Tyr-56 and Lys-95 together coordinate ATP. Glu-97 contacts Mg(2+). Residues 98 to 101 (SHNH) and Arg-120 each bind substrate. His-99 functions as the Proton acceptor in the catalytic mechanism. Asp-121 contributes to the Mg(2+) binding site. Gln-244 lines the substrate pocket. Asp-274 contributes to the Mg(2+) binding site. 318–320 (ESQ) contacts substrate. Residues Asp-501 and Gly-538 each contribute to the ATP site. Asn-539 is a binding site for Mg(2+). Ser-541 lines the substrate pocket.

This sequence belongs to the FGAMS family. In terms of assembly, monomer. Part of the FGAM synthase complex composed of 1 PurL, 1 PurQ and 2 PurS subunits.

The protein resides in the cytoplasm. It carries out the reaction N(2)-formyl-N(1)-(5-phospho-beta-D-ribosyl)glycinamide + L-glutamine + ATP + H2O = 2-formamido-N(1)-(5-O-phospho-beta-D-ribosyl)acetamidine + L-glutamate + ADP + phosphate + H(+). The protein operates within purine metabolism; IMP biosynthesis via de novo pathway; 5-amino-1-(5-phospho-D-ribosyl)imidazole from N(2)-formyl-N(1)-(5-phospho-D-ribosyl)glycinamide: step 1/2. Functionally, part of the phosphoribosylformylglycinamidine synthase complex involved in the purines biosynthetic pathway. Catalyzes the ATP-dependent conversion of formylglycinamide ribonucleotide (FGAR) and glutamine to yield formylglycinamidine ribonucleotide (FGAM) and glutamate. The FGAM synthase complex is composed of three subunits. PurQ produces an ammonia molecule by converting glutamine to glutamate. PurL transfers the ammonia molecule to FGAR to form FGAM in an ATP-dependent manner. PurS interacts with PurQ and PurL and is thought to assist in the transfer of the ammonia molecule from PurQ to PurL. The protein is Phosphoribosylformylglycinamidine synthase subunit PurL of Ligilactobacillus salivarius (strain UCC118) (Lactobacillus salivarius).